The following is a 122-amino-acid chain: Large ribosomal subunit protein bL12 (122 aa).

It belongs to the bacterial ribosomal protein bL12 family. Homodimer. Part of the ribosomal stalk of the 50S ribosomal subunit. Forms a multimeric L10(L12)X complex, where L10 forms an elongated spine to which 2 to 4 L12 dimers bind in a sequential fashion. Binds GTP-bound translation factors.

In terms of biological role, forms part of the ribosomal stalk which helps the ribosome interact with GTP-bound translation factors. Is thus essential for accurate translation. This Staphylococcus aureus (strain Mu50 / ATCC 700699) protein is Large ribosomal subunit protein bL12.